Reading from the N-terminus, the 92-residue chain is Small ribosomal subunit protein uS19 (92 aa).

The protein belongs to the universal ribosomal protein uS19 family.

Functionally, protein S19 forms a complex with S13 that binds strongly to the 16S ribosomal RNA. The chain is Small ribosomal subunit protein uS19 from Prochlorococcus marinus (strain MIT 9215).